The sequence spans 398 residues: Flavohemoprotein (398 aa).

The region spanning 9–147 (QLTPAQIKII…LAKLLIDLEA (139 aa)) is the Globin domain. His-93 is a heme b binding site. Catalysis depends on charge relay system residues Tyr-103 and Glu-146. Positions 155 to 398 (WRWFKDFKVT…KLEYFGPYDP (244 aa)) are reductase. One can recognise an FAD-binding FR-type domain in the interval 156 to 263 (RWFKDFKVTR…APPAGNFVYD (108 aa)). FAD-binding positions include Tyr-196 and 212–215 (REYS). An NADP(+)-binding site is contributed by 276 to 281 (GIGITP). 395-398 (PYDP) serves as a coordination point for FAD.

The protein belongs to the globin family. The cofactor is FAD. Heme b serves as cofactor.

It is found in the cytoplasm. It catalyses the reaction 2 nitric oxide + NADPH + 2 O2 = 2 nitrate + NADP(+) + H(+). The enzyme catalyses 2 nitric oxide + NADH + 2 O2 = 2 nitrate + NAD(+) + H(+). Inhibited by imidazoles. Functionally, nitric oxide dioxygenase involved in NO detoxification in an aerobic process, termed nitric oxide dioxygenase (NOD) reaction that utilizes O(2) and NAD(P)H to convert NO to nitrate, which protects the fungus from various noxious nitrogen compounds. Therefore, plays a central role in the inducible response to nitrosative stress. Plays a role in virulence since nitric oxide is generated by macrophages of the host immune system. This is Flavohemoprotein (YHB1) from Candida albicans (strain SC5314 / ATCC MYA-2876) (Yeast).